We begin with the raw amino-acid sequence, 558 residues long: Dihydroxy-acid dehydratase (558 aa).

Cys54 provides a ligand contact to [2Fe-2S] cluster. Residue Asp86 participates in Mg(2+) binding. A [2Fe-2S] cluster-binding site is contributed by Cys127. Asp128 and Lys129 together coordinate Mg(2+). Lys129 bears the N6-carboxylysine mark. Cys199 is a binding site for [2Fe-2S] cluster. Residue Glu448 coordinates Mg(2+). The active-site Proton acceptor is Ser474.

It belongs to the IlvD/Edd family. Homodimer. The cofactor is [2Fe-2S] cluster. Requires Mg(2+) as cofactor.

The enzyme catalyses (2R)-2,3-dihydroxy-3-methylbutanoate = 3-methyl-2-oxobutanoate + H2O. It carries out the reaction (2R,3R)-2,3-dihydroxy-3-methylpentanoate = (S)-3-methyl-2-oxopentanoate + H2O. It functions in the pathway amino-acid biosynthesis; L-isoleucine biosynthesis; L-isoleucine from 2-oxobutanoate: step 3/4. It participates in amino-acid biosynthesis; L-valine biosynthesis; L-valine from pyruvate: step 3/4. In terms of biological role, functions in the biosynthesis of branched-chain amino acids. Catalyzes the dehydration of (2R,3R)-2,3-dihydroxy-3-methylpentanoate (2,3-dihydroxy-3-methylvalerate) into 2-oxo-3-methylpentanoate (2-oxo-3-methylvalerate) and of (2R)-2,3-dihydroxy-3-methylbutanoate (2,3-dihydroxyisovalerate) into 2-oxo-3-methylbutanoate (2-oxoisovalerate), the penultimate precursor to L-isoleucine and L-valine, respectively. In Acidothermus cellulolyticus (strain ATCC 43068 / DSM 8971 / 11B), this protein is Dihydroxy-acid dehydratase.